The chain runs to 359 residues: UbiA prenyltransferase domain-containing protein 1 homolog (359 aa).

Polar residues predominate over residues 1–16; sequence MATSSQLLPNGNLSRN. A disordered region spans residues 1 to 23; it reads MATSSQLLPNGNLSRNGKTKTED. A run of 8 helical transmembrane segments spans residues 67–89, 98–118, 148–168, 177–197, 200–220, 262–284, 289–311, and 335–355; these read ALRPWSLSASLVPTLLGSALAYR, LATFFLTAFTVVTVHCAGNVV, VVSLGAILYMAGCGGFVLLAV, LALIYFGGLSSSFLYTGGIGF, IALGDLVILILFGPISVLFAF, IVTLAILIGRTASHVLYAMLLFA, FFIFGLKYSLWFLLPLVTLPQAF, and FFFGILYVVACCCAHQLPTFG.

Belongs to the UbiA prenyltransferase family.

The protein resides in the mitochondrion membrane. It functions in the pathway quinol/quinone metabolism; menaquinone biosynthesis. Functionally, prenyltransferase that mediates the formation of menaquinone-4 (MK-4), a vitamin K2 isoform, thereby acting as a mitochondrial electron carrier. Mediates the conversion of phylloquinone (PK) into MK-4, probably by cleaving the side chain of phylloquinone (PK) to release 2-methyl-1,4-naphthoquinone (menadione; K3) and then prenylating it with geranylgeranyl pyrophosphate (GGPP) to form MK-4. MK-4 acts as a membrane electron carrier downstream of a electron transport chain complex, improving mitochondrial oxygen consumption. The protein is UbiA prenyltransferase domain-containing protein 1 homolog (heix) of Drosophila melanogaster (Fruit fly).